The chain runs to 163 residues: Nucleotide-binding protein BcerKBAB4_1061 (163 aa).

Belongs to the YajQ family.

Its function is as follows. Nucleotide-binding protein. The chain is Nucleotide-binding protein BcerKBAB4_1061 from Bacillus mycoides (strain KBAB4) (Bacillus weihenstephanensis).